Here is a 317-residue protein sequence, read N- to C-terminus: U5 small nuclear ribonucleoprotein TSSC4 (317 aa).

The segment covering 1–19 (MAETEAGLEADEPTEDDTL) has biased composition (acidic residues). The interval 1-74 (MAETEAGLEA…PPTGTLTTAV (74 aa)) is disordered. Over residues 20 to 37 (PSDTVSLSDSDSDLSLPS) the composition is skewed to low complexity. Phosphoserine occurs at positions 57, 64, 83, and 92. Residues 74–101 (VQPFHLRGMSSTFSQRSHSIFDCLESAA) form a hom2; mediates interaction with the U5 snRNP complexes and required for spliceosomal tri-snRNP complex assembly region. Positions 101–152 (ARQAPCSAPQTSVSDNGSFRRPVTPPSQTPARGLSRVHGNTGPTRVLPVPDY) are disordered. The segment covering 108-117 (APQTSVSDNG) has biased composition (polar residues). Position 124 is a phosphothreonine (T124). The interaction with SNRNP200 stretch occupies residues 146-300 (VLPVPDYVSH…SKKRSRDHFR (155 aa)). The segment at 147–183 (LPVPDYVSHPERWTKYSLEDVSEASEQSNRDAALAFL) is hom3; mediates interaction with the U5 snRNP complexes. The interval 198-238 (FNQDPSSCGEGRVVFTKPVRDSEARAERKRVLKKGVGSGAG) is hom4; necessary for interaction with the PRPF19 complex and required for spliceosomal tri-snRNP complex assembly. Position 214 is an N6-acetyllysine (K214). The segment at 216 to 317 (VRDSEARAER…GPGSERGPSV (102 aa)) is disordered. Low complexity predominate over residues 240–250 (EAAVELAHLAG).

It belongs to the TSSC4 family. As to quaternary structure, interacts in a RNA-independent manner with distinct U5 snRNP-containing complexes, the mono-U5 snRNP and the post-splicing U5 snRNP-PRPF19 complex. Interacts with SNRNP200; the interaction is direct, excludes recruitment of C9ORF78 and WBP4 to SNRNP200 and negatively regulates its RNA helicase activity. Interacts with PRPF8; the interaction is direct. Expressed in placenta. Widely expressed in embryo and newborn.

It localises to the nucleus. Its subcellular location is the cytoplasm. Its function is as follows. Protein associated with the U5 snRNP, during its maturation and its post-splicing recycling and which is required for spliceosomal tri-snRNP complex assembly in the nucleus. Has a molecular sequestering activity and transiently hinders SNRNP200 binding sites for constitutive splicing factors that intervene later during the assembly of the spliceosome and splicing. Together with its molecular sequestering activity, may also function as a molecular adapter and placeholder, coordinating the assembly of the U5 snRNP and its association with the U4/U6 di-snRNP. This is U5 small nuclear ribonucleoprotein TSSC4 from Mus musculus (Mouse).